The primary structure comprises 591 residues: MKKISLPKIGIRPVIDGRRMGVRESLEAQTMNMAKATAALISEKLRHACGARVECVIADTCIAGMAESAACEEKFSSQNVGVTITVTPCWCYGSETIDMDPLRPKAIWGFNGTERPGAVYLAAALAAHSQKGIPAFSIYGHDVQDADDTSIPADVEEKLLRFARAGLAVASMKGKSYLSLGGVSMGIAGSIVDHNFFESWLGMKVQAVDMTELRRRIDQKIYDETELEMALAWADKHFRYGEDQNAEQYKRNETQSRAVLKESLLMAMCIRDMMQGNPKLAEKGLVEESLGYNAIAAGFQGQRHWTDQYPNGDTAEALLNSSFDWNGVREPFVVATENDSLNGVAMLMGHQLTGTAQVFADVRTYWSPDAVERVTGQPLTGRAEHGIIHLINSGSAALDGSCQQRDAQGNPTMKPHWEIEQSEADACLAATEWCPAIHEYFRGGGFSSRFLTEGGVPFTMTRVNIIKGLGPVLQIAEGWSVALPKAMHDQLDARTNSTWPTTWFAPRLTGKGPFSDVYSVMANWGANHGVLTIGHVGADFITLAAMLRIPVCMHNVEEAKIYRPSAWAAHGMDIEGQDYRACQNYGPLYKR.

Active-site proton acceptor residues include Glu337 and Asp361. Residues Glu337, Asp361, and His528 each coordinate Mn(2+).

The protein belongs to the L-fucose isomerase family. As to quaternary structure, homohexamer. Requires Mn(2+) as cofactor.

The protein localises to the cytoplasm. The enzyme catalyses L-fucose = L-fuculose. It participates in carbohydrate degradation; L-fucose degradation; L-lactaldehyde and glycerone phosphate from L-fucose: step 1/3. Converts the aldose L-fucose into the corresponding ketose L-fuculose. This Klebsiella pneumoniae subsp. pneumoniae (strain ATCC 700721 / MGH 78578) protein is L-fucose isomerase.